The sequence spans 2923 residues: Cadherin EGF LAG seven-pass G-type receptor 2 (2923 aa).

A signal peptide spans 1–31 (MRSPATGVPLPTPPPPLLLLLLLLLPPPLLG). The Extracellular portion of the chain corresponds to 32–2380 (DQVGPCRSLG…GEILPLKTLT (2349 aa)). The disordered stretch occupies residues 154–198 (PGLRAGERSPEESLGGRRKRNVNTAPQFQPPSYQATVPENQPAGT). Residues 158–168 (AGERSPEESLG) show a composition bias toward basic and acidic residues. Polar residues predominate over residues 175–196 (VNTAPQFQPPSYQATVPENQPA). Cadherin domains are found at residues 182 to 289 (QPPS…DPVF), 290 to 399 (EQQE…APQF), 400 to 505 (SEKR…APIF), 506 to 610 (VSTP…NPTF), 611 to 712 (TQPE…RPVF), 713 to 815 (QSSH…APQF), 816 to 921 (LRDS…PPVF), 922 to 1023 (EQDE…PPVL), and 1028 to 1146 (ILFN…SPLL). 3 N-linked (GlcNAc...) asparagine glycosylation sites follow: asparagine 486, asparagine 557, and asparagine 701. N-linked (GlcNAc...) asparagine glycans are attached at residues asparagine 1036, asparagine 1076, asparagine 1182, and asparagine 1212. An EGF-like 1; calcium-binding domain is found at 1228–1286 (DDNICLREPCENYMRCVSVLRFDSSAPFIASSSVLFRPIHPVGGLRCRCPPGFTGDYCE). Cystine bridges form between cysteine 1232–cysteine 1243, cysteine 1237–cysteine 1274, cysteine 1276–cysteine 1285, cysteine 1292–cysteine 1303, cysteine 1297–cysteine 1312, cysteine 1314–cysteine 1323, cysteine 1332–cysteine 1343, cysteine 1337–cysteine 1353, and cysteine 1355–cysteine 1365. Residues 1288–1324 (EVDLCYSRPCGPHGRCRSREGGYTCLCRDGYTGEHCE) enclose the EGF-like 2; calcium-binding domain. The region spanning 1328 to 1366 (RSGRCTPGVCKNGGTCVNLLVGGFKCDCPSGDFEKPYCQ) is the EGF-like 3; calcium-binding domain. Positions 1367–1571 (VTTRSFPAHS…IANNGTVPGC (205 aa)) constitute a Laminin G-like 1 domain. Asparagine 1501 and asparagine 1565 each carry an N-linked (GlcNAc...) asparagine glycan. 4 disulfide bridges follow: cysteine 1545–cysteine 1571, cysteine 1578–cysteine 1589, cysteine 1583–cysteine 1598, and cysteine 1600–cysteine 1609. The EGF-like 4; calcium-binding domain maps to 1574-1610 (KKNVCDSNTCHNGGTCVNQWDAFSCECPLGFGGKSCA). A (3R)-3-hydroxyasparagine modification is found at asparagine 1591. The Laminin G-like 2 domain maps to 1614–1791 (ANPQHFLGSS…GESINVEQGC (178 aa)). N-linked (GlcNAc...) asparagine glycosylation is present at asparagine 1741. 14 disulfide bridges follow: cysteine 1761/cysteine 1791, cysteine 1797/cysteine 1808, cysteine 1802/cysteine 1817, cysteine 1819/cysteine 1828, cysteine 1832/cysteine 1843, cysteine 1837/cysteine 1855, cysteine 1857/cysteine 1866, cysteine 1887/cysteine 1899, cysteine 1889/cysteine 1906, cysteine 1908/cysteine 1921, cysteine 1924/cysteine 1936, cysteine 1926/cysteine 1943, cysteine 1945/cysteine 1954, and cysteine 1957/cysteine 1969. One can recognise an EGF-like 5; calcium-binding domain in the interval 1793 to 1828 (LPDPCDSNPCPANSYCSNDWDSYSCSCDPGYYGDNC). Asparagine 1810 carries the (3R)-3-hydroxyasparagine modification. Residue asparagine 1827 is glycosylated (N-linked (GlcNAc...) asparagine). The EGF-like 6; calcium-binding domain maps to 1829-1867 (TNVCDLNPCEHQSVCTRKPSAPHGYTCECPPNYLGPYCE). Residues 1883-1922 (TCGPCNCDVSKGFDPDCNKTSGECHCKENHYRPPGSPTCL) form the EGF-like 7; calcium-binding domain. N-linked (GlcNAc...) asparagine glycosylation occurs at asparagine 1900. Positions 1924 to 1971 (CDCYPTGSLSRVCDPEDGQCPCKPGVIGRQCDRCDNPFAEVTTNGCEV) constitute a Laminin EGF-like domain. N-linked (GlcNAc...) asparagine glycans are attached at residues asparagine 2024, asparagine 2043, and asparagine 2061. Residues 2199-2369 (ETTVILPESV…AVLMDVSRRE (171 aa)) enclose the GAIN-B domain. Residues 2213 to 2238 (PPVVRPAGPGEAQEPEELARRQRRHP) form a disordered region. Cystine bridges form between cysteine 2319-cysteine 2351 and cysteine 2339-cysteine 2353. Positions 2319-2369 (CVFWNHSILVSGTGGWSARGCEVVFRNESHVSCQCNHMTSFAVLMDVSRRE) are GPS. 2 N-linked (GlcNAc...) asparagine glycosylation sites follow: asparagine 2323 and asparagine 2345. Residues 2381 to 2401 (YVALGVTLAALLLTFFFLTLL) form a helical membrane-spanning segment. The Cytoplasmic segment spans residues 2402 to 2416 (RILRSNQHGIRRNLT). A helical membrane pass occupies residues 2417–2437 (AALGLAQLVFLLGINQADLPF). A topological domain (extracellular) is located at residue alanine 2438. The chain crosses the membrane as a helical span at residues 2439 to 2459 (CTVIAILLHFLYLCTFSWALL). Over 2460-2480 (EALHLYRALTEVRDVNTGPMR) the chain is Cytoplasmic. Residues 2481-2501 (FYYMLGWGVPAFITGLAVGLD) form a helical membrane-spanning segment. Residues 2502 to 2519 (PEGYGNPDFCWLSIYDTL) lie on the Extracellular side of the membrane. A helical transmembrane segment spans residues 2520 to 2540 (IWSFAGPVAFAVSMSVFLYIL). Residues 2541–2560 (AARASCAAQRQGFEKKGPVS) lie on the Cytoplasmic side of the membrane. Residues 2561–2581 (GLQPSFAVLLLLSATWLLALL) traverse the membrane as a helical segment. Residues 2582-2591 (SVNSDTLLFH) are Extracellular-facing. The chain crosses the membrane as a helical span at residues 2592-2612 (YLFATCNCIQGPFIFLSYVVL). Residues 2613 to 2923 (SKEVRKALKL…SEFLFFNFLH (311 aa)) are Cytoplasmic-facing. 2 disordered regions span residues 2688 to 2838 (SALN…HKGI) and 2854 to 2888 (LRLP…RQSL). Composition is skewed to acidic residues over residues 2718–2730 (TDSD…EDDQ) and 2742–2753 (SEEEEEEEEEEA). Positions 2807–2819 (PEERLRENGDALS) are enriched in basic and acidic residues. The span at 2863 to 2873 (GSSRGSSASEG) shows a compositional bias: low complexity.

Belongs to the G-protein coupled receptor 2 family. LN-TM7 subfamily. Heterodimer of 2 chains generated by proteolytic processing; the large extracellular N-terminal fragment and the membrane-bound C-terminal fragment predominantly remain associated and non-covalently linked. In terms of processing, the iron and 2-oxoglutarate dependent 3-hydroxylation of aspartate and asparagine is (R) stereospecific within EGF domains. Autoproteolytically processed at the GPS region of the GAIN-B domain; this cleavage modulates receptor activity. In terms of tissue distribution, highest expression in brain and testis.

It localises to the cell membrane. In terms of biological role, receptor that may have an important role in cell/cell signaling during nervous system formation. The polypeptide is Cadherin EGF LAG seven-pass G-type receptor 2 (Homo sapiens (Human)).